A 105-amino-acid polypeptide reads, in one-letter code: MADGSGWQPPRPCEAYRAEWKLCRSARHFLHHYYVHGERPACEQWQRDLASCRDWEERRNAEAQQSLCESERARVRAARKHILVWAPRQSPPPDWHLPLPQEKDE.

It belongs to the UPF0545 family. In terms of assembly, interacts with RTN4 isoform A/Nogo-A; the interaction results in enhanced RTN4-mediated inhibition of AMPA receptor clustering. Also interacts with NCAM1, RANBP2 and CCT8. In terms of processing, rapidly degraded by proteolysis following neuronal stimulation, resulting in increased AMPA receptor clustering.

The protein localises to the synapse. The protein resides in the synaptic cleft. In terms of biological role, negatively regulates long-term potentiation and modulates adult synaptic plasticity. Stabilizes the interaction of RTN4 isoform A/Nogo-A with its receptors, inhibiting clustering of postsynaptic AMPA receptors at synaptic sites. Upon neuronal stimulation, degraded at synapses, reducing RTN4 signaling and allowing AMPA receptor clustering at individual synapses. The sequence is that of Synaptic plasticity regulator PANTS (C22orf39) from Homo sapiens (Human).